A 284-amino-acid polypeptide reads, in one-letter code: Avenin-like b6 (284 aa).

An N-terminal signal peptide occupies residues 1-18 (MKVFILALLALAATTAIA).

The protein belongs to the prolamin family. Post-translationally, contains disulfide bonds.

In terms of biological role, seed storage protein. Might be integrated via inter-chain disulfide bonds within the glutenin polymer. The chain is Avenin-like b6 from Triticum aestivum (Wheat).